We begin with the raw amino-acid sequence, 375 residues long: Glutaconyl-CoA decarboxylase subunit beta (375 aa).

11 helical membrane-spanning segments follow: residues 16-39 (GFVA…YLAI), 46-65 (LLLS…RTGF), 74-96 (LILG…GAMT), 107-130 (TLLL…LLGF), 137-153 (AIGI…IYLA), 160-178 (LLGA…VPLI), 208-232 (VVFP…IGML), 254-271 (ALMN…GLTM), 284-302 (IICL…GVLF), 316-332 (PLIG…AARV), and 345-369 (FLLM…GTML).

It belongs to the GcdB/MmdB/OadB family. In terms of assembly, heterooctamer consisting of two alpha, two beta, two gamma and two delta subunits. The N-terminus is blocked.

It is found in the cell membrane. It carries out the reaction (2E)-glutaconyl-CoA + Na(+)(in) + H(+) = (2E)-butenoyl-CoA + Na(+)(out) + CO2. It participates in amino-acid degradation; L-glutamate degradation via hydroxyglutarate pathway; crotonoyl-CoA from L-glutamate: step 5/5. Functionally, tunnel subunit of the primary sodium pump glutaconyl-CoA decarboxylase (GCD). The polypeptide is Glutaconyl-CoA decarboxylase subunit beta (gcdB) (Acidaminococcus fermentans (strain ATCC 25085 / DSM 20731 / CCUG 9996 / CIP 106432 / VR4)).